Reading from the N-terminus, the 1856-residue chain is Zinc metalloprotease ZmpC (1856 aa).

Positions 1 to 42 (MSRKSIGEKRHSFSMRKLSVGLVSVTVSSFFLMSQGIQSVSA) are cleaved as a signal peptide. Residues 43–95 (DNMESPIHYKYMTEGKLTDEEKSLLVEALPQLAEESDDTYYLVYRSQQFLPNT) constitute a propeptide that is removed on maturation. Residues 92-96 (LPNTG) carry the LPXTG sorting signal motif. Pentaglycyl murein peptidoglycan amidated threonine is present on T95. 2 helical membrane passes run 97 to 117 (FNPTVGTFLFTAGLSLLVLLV) and 130 to 152 (FLLLTSMGVQLLPASAFGLTSQI). Residues 153–1856 (LSAYNSQLSI…TDDFRNSIYK (1704 aa)) lie on the Extracellular side of the membrane. Composition is skewed to polar residues over residues 254-267 (NLSSNDSFASQVEQ) and 286-295 (NPVSATTVQS). A disordered region spans residues 254 to 362 (NLSSNDSFAS…GEAAVREEEP (109 aa)). 2 stretches are compositionally biased toward basic and acidic residues: residues 322–334 (PGHEGEAAVREDL) and 351–361 (HEGEAAVREEE). Residues 417-496 (ALEVTTRNRT…NEVVKVGTLV (80 aa)) enclose the G5 domain. Position 1502 (H1502) interacts with Zn(2+). The active site involves E1503. Positions 1506 and 1526 each coordinate Zn(2+).

The protein belongs to the peptidase M26 family. The cofactor is Zn(2+). In terms of processing, the Gram-positive cell-wall anchor motif LPXTG is located in the N-terminal part, in contrast to such motifs in other known streptococcal and staphylococcal proteins. The protease could be cleaved by the sortase and anchored in the membrane via the two potential N-terminal transmembrane domains, whereas the propeptide located prior to the LPXTG motif would remain attached to the cell wall peptidoglycan by an amide bond.

The protein resides in the secreted. The protein localises to the cell wall. Its subcellular location is the membrane. In terms of biological role, zinc metalloproteinase that specifically cleaves human matrix metalloproteinase 9 (MMP-9), leading to its activation. May play a role in pneumococcal virulence and pathogenicity in the lung. The sequence is that of Zinc metalloprotease ZmpC (zmpC) from Streptococcus pneumoniae serotype 4 (strain ATCC BAA-334 / TIGR4).